Reading from the N-terminus, the 735-residue chain is Ion-translocating oxidoreductase complex subunit C (735 aa).

4Fe-4S ferredoxin-type domains are found at residues 368-397 (MGAP…QQLY) and 407-436 (KATA…VQYF). Cys-377, Cys-380, Cys-383, Cys-387, Cys-416, Cys-419, Cys-422, and Cys-426 together coordinate [4Fe-4S] cluster. The tract at residues 538–715 (KQAAHPMADS…PADPRKAAVA (178 aa)) is disordered. Residues 556–565 (KAAVEAAIAR) show a composition bias toward low complexity.

It belongs to the 4Fe4S bacterial-type ferredoxin family. RnfC subfamily. In terms of assembly, the complex is composed of six subunits: RsxA, RsxB, RsxC, RsxD, RsxE and RsxG. [4Fe-4S] cluster is required as a cofactor.

It is found in the cell inner membrane. Its function is as follows. Part of a membrane-bound complex that couples electron transfer with translocation of ions across the membrane. Required to maintain the reduced state of SoxR. The chain is Ion-translocating oxidoreductase complex subunit C from Salmonella typhimurium (strain LT2 / SGSC1412 / ATCC 700720).